Here is a 218-residue protein sequence, read N- to C-terminus: Thiopurine S-methyltransferase (218 aa).

Trp10, Leu45, Glu66, and Arg123 together coordinate S-adenosyl-L-methionine.

It belongs to the class I-like SAM-binding methyltransferase superfamily. TPMT family.

Its subcellular location is the cytoplasm. The enzyme catalyses S-adenosyl-L-methionine + a thiopurine = S-adenosyl-L-homocysteine + a thiopurine S-methylether.. The protein is Thiopurine S-methyltransferase of Pseudomonas aeruginosa (strain UCBPP-PA14).